The following is a 172-amino-acid chain: Endoribonuclease YbeY (172 aa).

The segment at 1–21 is disordered; the sequence is MTLHVGAEPAPREDDTEDALR. Positions 10-21 are enriched in basic and acidic residues; it reads APREDDTEDALR. His-134, His-138, and His-144 together coordinate Zn(2+).

The protein belongs to the endoribonuclease YbeY family. It depends on Zn(2+) as a cofactor.

The protein resides in the cytoplasm. In terms of biological role, single strand-specific metallo-endoribonuclease involved in late-stage 70S ribosome quality control and in maturation of the 3' terminus of the 16S rRNA. The protein is Endoribonuclease YbeY of Burkholderia lata (strain ATCC 17760 / DSM 23089 / LMG 22485 / NCIMB 9086 / R18194 / 383).